A 565-amino-acid chain; its full sequence is uncharacterized protein (565 aa).

Residues 1–19 (MRWLATFVALLIAISSVSA) form the signal peptide. Residues 494 to 504 (TGAENVTNNSV) are compositionally biased toward polar residues. A disordered region spans residues 494-525 (TGAENVTNNSVTATTPPAKASQQTPAPATPPV). Low complexity predominate over residues 505–519 (TATTPPAKASQQTPA).

This is an uncharacterized protein from Archaeoglobus fulgidus (strain ATCC 49558 / DSM 4304 / JCM 9628 / NBRC 100126 / VC-16).